We begin with the raw amino-acid sequence, 369 residues long: Mitogen-activated protein kinase 11 (369 aa).

The Protein kinase domain maps to 40-326 (VPPLRPIGRG…VDEALCHPYL (287 aa)). Residues 46–54 (IGRGASGIV) and lysine 69 contribute to the ATP site. The active-site Proton acceptor is the aspartate 166. Threonine 198 is subject to Phosphothreonine. The short motif at 198–200 (TEY) is the TXY element. Tyrosine 200 is subject to Phosphotyrosine. Threonine 203 is subject to Phosphothreonine.

Belongs to the protein kinase superfamily. CMGC Ser/Thr protein kinase family. MAP kinase subfamily. In terms of assembly, interacts with MKK1, MKK2 and MKK6. Dually phosphorylated on Thr-198 and Tyr-200, which activates the enzyme.

It carries out the reaction L-seryl-[protein] + ATP = O-phospho-L-seryl-[protein] + ADP + H(+). It catalyses the reaction L-threonyl-[protein] + ATP = O-phospho-L-threonyl-[protein] + ADP + H(+). Its activity is regulated as follows. Activated by threonine and tyrosine phosphorylation. The sequence is that of Mitogen-activated protein kinase 11 (MPK11) from Arabidopsis thaliana (Mouse-ear cress).